Here is a 372-residue protein sequence, read N- to C-terminus: Fatty acid 2-hydroxylase (372 aa).

One can recognise a Cytochrome b5 heme-binding domain in the interval 8 to 86 (AASFTSAEVQ…LEQYYVGELR (79 aa)). The heme site is built by His-43 and His-69. 2 helical membrane-spanning segments follow: residues 168 to 188 (VWYS…WSYY) and 213 to 233 (SVFI…EYLI). One can recognise a Fatty acid hydroxylase domain in the interval 219–361 (FVLGMLIWTL…TKLWDYFFHT (143 aa)). 5 residues coordinate Zn(2+): His-234, His-239, His-257, His-260, and His-261. The next 2 membrane-spanning stretches (helical) occupy residues 268–288 (SRLV…YVFL) and 290–310 (LILP…GYVL). Zn(2+)-binding residues include His-315, His-319, His-336, His-339, and His-340.

It belongs to the sterol desaturase family. SCS7 subfamily. Requires Zn(2+) as cofactor. As to expression, detected in oligodendrocytes (at protein level). Detected in sciatic nerve.

The protein resides in the endoplasmic reticulum membrane. Its subcellular location is the microsome membrane. It catalyses the reaction a 1,2-saturated fatty acid + 2 Fe(II)-[cytochrome b5] + O2 + 2 H(+) = a (R)-2-hydroxy fatty acid + 2 Fe(III)-[cytochrome b5] + H2O. The enzyme catalyses hexadecanoate + 2 Fe(II)-[cytochrome b5] + O2 + 2 H(+) = (R)-2-hydroxyhexadecanoate + 2 Fe(III)-[cytochrome b5] + H2O. The catalysed reaction is octadecanoate + 2 Fe(II)-[cytochrome b5] + O2 + 2 H(+) = (R)-2-hydroxyoctadecanoate + 2 Fe(III)-[cytochrome b5] + H2O. It carries out the reaction docosanoate + 2 Fe(II)-[cytochrome b5] + O2 + 2 H(+) = 2-hydroxydocosanoate + 2 Fe(III)-[cytochrome b5] + H2O. It catalyses the reaction tetracosanoate + 2 Fe(II)-[cytochrome b5] + O2 + 2 H(+) = (R)-2-hydroxytetracosanoate + 2 Fe(III)-[cytochrome b5] + H2O. Its pathway is lipid metabolism; fatty acid metabolism. It participates in sphingolipid metabolism; galactosylceramide biosynthesis. In terms of biological role, catalyzes the hydroxylation of free fatty acids at the C-2 position to produce 2-hydroxy fatty acids, which are building blocks of sphingolipids and glycosphingolipids common in neural tissue and epidermis. FA2H is stereospecific for the production of (R)-2-hydroxy fatty acids. Plays an essential role in the synthesis of galactosphingolipids of the myelin sheath. Responsible for the synthesis of sphingolipids and glycosphingolipids involved in the formation of epidermal lamellar bodies critical for skin permeability barrier. Participates in the synthesis of glycosphingolipids and a fraction of type II wax diesters in sebaceous gland, specifically regulating hair follicle homeostasis. Involved in the synthesis of sphingolipids of plasma membrane rafts, controlling lipid raft mobility and trafficking of raft-associated proteins. The polypeptide is Fatty acid 2-hydroxylase (Rattus norvegicus (Rat)).